We begin with the raw amino-acid sequence, 99 residues long: Aspartyl/glutamyl-tRNA(Asn/Gln) amidotransferase subunit C (99 aa).

Belongs to the GatC family. Heterotrimer of A, B and C subunits.

The enzyme catalyses L-glutamyl-tRNA(Gln) + L-glutamine + ATP + H2O = L-glutaminyl-tRNA(Gln) + L-glutamate + ADP + phosphate + H(+). It catalyses the reaction L-aspartyl-tRNA(Asn) + L-glutamine + ATP + H2O = L-asparaginyl-tRNA(Asn) + L-glutamate + ADP + phosphate + 2 H(+). Allows the formation of correctly charged Asn-tRNA(Asn) or Gln-tRNA(Gln) through the transamidation of misacylated Asp-tRNA(Asn) or Glu-tRNA(Gln) in organisms which lack either or both of asparaginyl-tRNA or glutaminyl-tRNA synthetases. The reaction takes place in the presence of glutamine and ATP through an activated phospho-Asp-tRNA(Asn) or phospho-Glu-tRNA(Gln). The chain is Aspartyl/glutamyl-tRNA(Asn/Gln) amidotransferase subunit C from Bifidobacterium longum (strain NCC 2705).